Consider the following 539-residue polypeptide: Membrane protein insertase YidC (539 aa).

Helical transmembrane passes span 6–26 (TLLV…WQVA), 341–361 (SVIQ…TFIV), 416–436 (LGGC…YWAL), 454–474 (LSAQ…MFLI), and 495–515 (PVMF…YWLV).

The protein belongs to the OXA1/ALB3/YidC family. Type 1 subfamily. Interacts with the Sec translocase complex via SecD. Specifically interacts with transmembrane segments of nascent integral membrane proteins during membrane integration.

The protein localises to the cell inner membrane. Its function is as follows. Required for the insertion and/or proper folding and/or complex formation of integral membrane proteins into the membrane. Involved in integration of membrane proteins that insert both dependently and independently of the Sec translocase complex, as well as at least some lipoproteins. Aids folding of multispanning membrane proteins. This Vibrio vulnificus (strain YJ016) protein is Membrane protein insertase YidC.